The chain runs to 360 residues: Phosphoserine aminotransferase (360 aa).

Residue R42 participates in L-glutamate binding. Residues 76-77, W102, T152, D172, and Q195 each bind pyridoxal 5'-phosphate; that span reads AR. At K196 the chain carries N6-(pyridoxal phosphate)lysine. A pyridoxal 5'-phosphate-binding site is contributed by 237-238; the sequence is NT.

It belongs to the class-V pyridoxal-phosphate-dependent aminotransferase family. SerC subfamily. In terms of assembly, homodimer. The cofactor is pyridoxal 5'-phosphate.

It is found in the cytoplasm. It carries out the reaction O-phospho-L-serine + 2-oxoglutarate = 3-phosphooxypyruvate + L-glutamate. It catalyses the reaction 4-(phosphooxy)-L-threonine + 2-oxoglutarate = (R)-3-hydroxy-2-oxo-4-phosphooxybutanoate + L-glutamate. The protein operates within amino-acid biosynthesis; L-serine biosynthesis; L-serine from 3-phospho-D-glycerate: step 2/3. It participates in cofactor biosynthesis; pyridoxine 5'-phosphate biosynthesis; pyridoxine 5'-phosphate from D-erythrose 4-phosphate: step 3/5. In terms of biological role, catalyzes the reversible conversion of 3-phosphohydroxypyruvate to phosphoserine and of 3-hydroxy-2-oxo-4-phosphonooxybutanoate to phosphohydroxythreonine. This is Phosphoserine aminotransferase from Pasteurella multocida (strain Pm70).